The chain runs to 558 residues: Factor VII-activating protease (558 aa).

Residues 1 to 23 form the signal peptide; the sequence is MFARMSDLHVLLLMVLAGKTAFG. Residue Asn-54 is glycosylated (N-linked (GlcNAc...) asparagine). EGF-like domains lie at 71 to 107, 109 to 146, and 148 to 186; these read EDDP…NRCQ, VQNK…SDCS, and VVPV…KLCE. Intrachain disulfides connect Cys-75/Cys-86, Cys-80/Cys-95, Cys-97/Cys-106, Cys-113/Cys-123, Cys-118/Cys-134, Cys-136/Cys-145, Cys-152/Cys-163, Cys-157/Cys-174, Cys-176/Cys-185, Cys-192/Cys-274, Cys-213/Cys-255, Cys-244/Cys-269, Cys-299/Cys-433, Cys-345/Cys-361, Cys-353/Cys-422, Cys-445/Cys-513, Cys-475/Cys-491, and Cys-503/Cys-531. Residues 191 to 274 enclose the Kringle domain; it reads DCYVDDGYSY…KWEYCDVPAC (84 aa). In terms of domain architecture, Peptidase S1 spans 312–553; that stretch reads IFGGFKSTAG…FLTWIKATME (242 aa). Catalysis depends on charge relay system residues His-360 and Asp-409. The Charge relay system role is filled by Ser-507.

Belongs to the peptidase S1 family. In terms of assembly, heterodimer; disulfide-linked. Heterodimer of a 50 kDa heavy and a 27 kDa light chain linked by a disulfide bond. Post-translationally, proteolytic cleavage at Gly-23 or Leu-27 can give rise to the 50 kDa heavy chain (HC) and cleavage at Arg-311 or Lys-317 can give rise to the 27 kDa light chain (LC). The HC can undergo further proteolytic cleavage giving rise to a 26 kDa fragment. The LC can undergo further proteolytic cleavage at Arg-311 leading to a 17-kDa fragment and at Arg-478 leading to a 8-kDa fragment.

It localises to the secreted. In terms of biological role, cleaves the alpha-chain at multiple sites and the beta-chain between 'Lys-53' and 'Lys-54' but not the gamma-chain of fibrinogen and therefore does not initiate the formation of the fibrin clot and does not cause the fibrinolysis directly. It does not cleave (activate) prothrombin and plasminogen but converts the inactive single chain urinary plasminogen activator (pro-urokinase) to the active two chain form. Activates coagulation factor VII. May function as a tumor suppressor negatively regulating cell proliferation and cell migration. The chain is Factor VII-activating protease (HABP2) from Bos taurus (Bovine).